The primary structure comprises 247 residues: DNA polymerase sliding clamp (247 aa).

This sequence belongs to the PCNA family. Homotrimer. The subunits circularize to form a toroid; DNA passes through its center. Replication factor C (RFC) is required to load the toroid on the DNA.

Sliding clamp subunit that acts as a moving platform for DNA processing. Responsible for tethering the catalytic subunit of DNA polymerase and other proteins to DNA during high-speed replication. The chain is DNA polymerase sliding clamp from Halobacterium salinarum (strain ATCC 29341 / DSM 671 / R1).